The primary structure comprises 247 residues: MAQPDDAALPFSLLQFYATSPYPCSYLPDREARSQVATPAHLIDSEIYSSLIRTGFRRSGIFTYRPHCDGCKACVPVRLPVTELRPNRSQRRAMKHHAKLRVRELPLVYIDEHYALYNRYQQARHPGGGMDEDSHEQYAQFLLQSRVDTRLIEFSDDEGIRMVSLIDVLDDGLSSVYTFYDPDIPDASFGTYNILWQAAQCQALGLPYLYLGYWIANSRKMAYKAMFQPIEGLIDGHWLALPKLEKT.

The protein belongs to the R-transferase family. Bpt subfamily.

It localises to the cytoplasm. It catalyses the reaction N-terminal L-glutamyl-[protein] + L-leucyl-tRNA(Leu) = N-terminal L-leucyl-L-glutamyl-[protein] + tRNA(Leu) + H(+). It carries out the reaction N-terminal L-aspartyl-[protein] + L-leucyl-tRNA(Leu) = N-terminal L-leucyl-L-aspartyl-[protein] + tRNA(Leu) + H(+). Its function is as follows. Functions in the N-end rule pathway of protein degradation where it conjugates Leu from its aminoacyl-tRNA to the N-termini of proteins containing an N-terminal aspartate or glutamate. This Dechloromonas aromatica (strain RCB) protein is Aspartate/glutamate leucyltransferase.